The following is a 258-amino-acid chain: MERKHHFVLVHNAYHGAWIWYKLKPLLESAGHRVTAVELAASGIDPRPIQAVETVDEYSKPLIETLKSLPENEEVILVGFSFGGINIALAADIFPAKIKVLVFLNAFLPDTTHVPSHVLDKYMEMPGGLGDCEFSSHETRNGTMSLLKMGPKFMKARLYQNCPIEDYELAKMLHRQGSFFTEDLSKKEKFSEEGYGSVQRVYVMSSEDKAIPCDFIRWMIDNFNVSKVYEIDGGDHMVMLSKPQKLFDSLSAIATDYM.

Active-site proton donor/acceptor residues include Ser-81 and His-236.

Belongs to the AB hydrolase superfamily. Hydroxynitrile lyase family. In terms of assembly, homodimer.

The enzyme catalyses (R)-mandelonitrile = benzaldehyde + hydrogen cyanide. Involved in cyanogenesis, the release of HCN from injured tissues. Displays R-selective hydroxynitrile lyase activity. Also accepts nitromethane (MeNO2) as a donor in a reaction with aromatic aldehydes to yield (R)-beta-nitro alcohols. The sequence is that of Alpha-hydroxynitrile lyase from Arabidopsis thaliana (Mouse-ear cress).